The sequence spans 1405 residues: DNA-directed RNA polymerase subunit beta' (1405 aa).

Residues Cys-71, Cys-73, Cys-86, and Cys-89 each contribute to the Zn(2+) site. Residues Asp-462, Asp-464, and Asp-466 each contribute to the Mg(2+) site. Zn(2+) is bound by residues Cys-820, Cys-893, Cys-900, and Cys-903.

This sequence belongs to the RNA polymerase beta' chain family. As to quaternary structure, the RNAP catalytic core consists of 2 alpha, 1 beta, 1 beta' and 1 omega subunit. When a sigma factor is associated with the core the holoenzyme is formed, which can initiate transcription. It depends on Mg(2+) as a cofactor. Requires Zn(2+) as cofactor.

The catalysed reaction is RNA(n) + a ribonucleoside 5'-triphosphate = RNA(n+1) + diphosphate. DNA-dependent RNA polymerase catalyzes the transcription of DNA into RNA using the four ribonucleoside triphosphates as substrates. The protein is DNA-directed RNA polymerase subunit beta' of Methylorubrum populi (strain ATCC BAA-705 / NCIMB 13946 / BJ001) (Methylobacterium populi).